Reading from the N-terminus, the 327-residue chain is MTGTTLAATYGPISGADLEAELAQPRIADGDAQDAAVYERDGGAHAPPDGDRADVRRAAGAGDASVRLTRVSKRYGERAVLADVDLSIGRGSFVSIVGRSGCGKSTLLRLVAELETPSAGTLVKRGDGGGALDTRIMYQEARLLPWKTVLQNVMLGLGRRAKDDARAVLDEVGLLARANDWPAQLSGGQRQRVALARALVHRPQLLLLDEPLGALDALTRIEMHALIERLWREHRFTALLVTHDVQEAVALADRVLLIEAGRIAFDQRVPLDRPRARASAAFAALEDRVLQRVLTGSDAAPAAPNAAGPEGASRGRAAPASGLRWAV.

The segment at Glu-21–Asp-54 is disordered. A compositionally biased stretch (basic and acidic residues) spans Val-37–Asp-54. Residues Val-66 to Leu-285 enclose the ABC transporter domain. Residue Gly-98–Ser-105 participates in ATP binding. Positions Ala-300 to Val-327 are disordered.

It belongs to the ABC transporter superfamily. Aliphatic sulfonates importer (TC 3.A.1.17.2) family. In terms of assembly, the complex is composed of two ATP-binding proteins (SsuB), two transmembrane proteins (SsuC) and a solute-binding protein (SsuA).

The protein localises to the cell inner membrane. The catalysed reaction is ATP + H2O + aliphatic sulfonate-[sulfonate-binding protein]Side 1 = ADP + phosphate + aliphatic sulfonateSide 2 + [sulfonate-binding protein]Side 1.. Part of the ABC transporter complex SsuABC involved in aliphatic sulfonates import. Responsible for energy coupling to the transport system. This is Aliphatic sulfonates import ATP-binding protein SsuB from Burkholderia pseudomallei (strain K96243).